Here is a 465-residue protein sequence, read N- to C-terminus: VGFKAGVKDYKLTYYTPEYETKDTDILAAFRVTPQPGVPPEEAGAAVAAESSTGTWTTVWTDGLTSLDPYKGRCYHIEPVAGEESQFIAYVAYPLDLFEEGSVTNMFTSIVGNVFGFKALRALRLEDLRIPTAYVKTFQGPPHGIQVERDKLNKYGRPLLGCTIKPKLGLSAKNYGRAVYECLRGGLDFTKDDENVNSQPFMRWRDRFLFCAEAIYKSQAETGEIKGHYLNATAGTCEDMMKRAVFARELGVPIVMHDYLTGGFTANTTLAHYCRDNGLLLHIHRAMHAVIDRQKNHGMHFRVLAKALRMSGGDHIHAGTVVGKLEGEREITLGFVDLPRDDFIEKDRSRGIYFTQDWVSLPGVLPVASGGIHVWHMPALTEIFGDDSVLQFGGGTLGHPWGNAPGAVANRVALEACVQARNEGRDLAREGNEIIREASKWSPELAAACEVWKEIKFEFPAMDTL.

An N6,N6,N6-trimethyllysine modification is found at Lys4. Positions 113 and 163 each coordinate substrate. The active-site Proton acceptor is Lys165. Lys167 serves as a coordination point for substrate. Mg(2+) contacts are provided by Lys191, Asp193, and Glu194. Position 191 is an N6-carboxylysine (Lys191). His284 acts as the Proton acceptor in catalysis. 3 residues coordinate substrate: Arg285, His317, and Ser369.

This sequence belongs to the RuBisCO large chain family. Type I subfamily. As to quaternary structure, heterohexadecamer of 8 large chains and 8 small chains; disulfide-linked. The disulfide link is formed within the large subunit homodimers. Requires Mg(2+) as cofactor. In terms of processing, the disulfide bond which can form in the large chain dimeric partners within the hexadecamer appears to be associated with oxidative stress and protein turnover.

The protein resides in the plastid. It localises to the chloroplast. The catalysed reaction is 2 (2R)-3-phosphoglycerate + 2 H(+) = D-ribulose 1,5-bisphosphate + CO2 + H2O. The enzyme catalyses D-ribulose 1,5-bisphosphate + O2 = 2-phosphoglycolate + (2R)-3-phosphoglycerate + 2 H(+). RuBisCO catalyzes two reactions: the carboxylation of D-ribulose 1,5-bisphosphate, the primary event in carbon dioxide fixation, as well as the oxidative fragmentation of the pentose substrate in the photorespiration process. Both reactions occur simultaneously and in competition at the same active site. The chain is Ribulose bisphosphate carboxylase large chain from Morella cerifera (Wax myrtle).